A 197-amino-acid polypeptide reads, in one-letter code: MRYPWFRLAIFIVGCLFPVWWLYEAAMNLLGPDPGKIMMDRLGLGALTFLLVTLSMTPLQKLTGWSGWIVVRRQLGLWVFAYIVLHILCYLFFILGLDWGQLAVELRKRPYIIVGALGFLGLLVLAVTSNRYSQRRLGARWKKLHRLVYAVLGLGLLHFLWIVRSDLREWAIYAFIGAVLMVLRIPAVARALPKVAR.

The next 6 membrane-spanning stretches (helical) occupy residues 10–30 (IFIV…MNLL), 42–62 (LGLG…LQKL), 75–95 (LGLW…FFIL), 110–130 (PYII…VTSN), 147–167 (LVYA…RSDL), and 169–189 (EWAI…PAVA).

This sequence belongs to the MsrQ family. In terms of assembly, heterodimer of a catalytic subunit (MsrP) and a heme-binding subunit (MsrQ). The cofactor is FMN. Requires heme b as cofactor.

It localises to the cell inner membrane. Functionally, part of the MsrPQ system that repairs oxidized periplasmic proteins containing methionine sulfoxide residues (Met-O), using respiratory chain electrons. Thus protects these proteins from oxidative-stress damage caused by reactive species of oxygen and chlorine generated by the host defense mechanisms. MsrPQ is essential for the maintenance of envelope integrity under bleach stress, rescuing a wide series of structurally unrelated periplasmic proteins from methionine oxidation. MsrQ provides electrons for reduction to the reductase catalytic subunit MsrP, using the quinone pool of the respiratory chain. The protein is Protein-methionine-sulfoxide reductase heme-binding subunit MsrQ of Pseudomonas putida (strain ATCC 47054 / DSM 6125 / CFBP 8728 / NCIMB 11950 / KT2440).